Consider the following 166-residue polypeptide: Small ribosomal subunit protein uS5 (166 aa).

The region spanning 12 to 75 is the S5 DRBM domain; the sequence is YIEKLVQVNR…EAARRNMIQV (64 aa).

The protein belongs to the universal ribosomal protein uS5 family. In terms of assembly, part of the 30S ribosomal subunit. Contacts proteins S4 and S8.

Functionally, with S4 and S12 plays an important role in translational accuracy. In terms of biological role, located at the back of the 30S subunit body where it stabilizes the conformation of the head with respect to the body. The chain is Small ribosomal subunit protein uS5 from Pseudomonas fluorescens (strain Pf0-1).